Consider the following 429-residue polypeptide: Trigger factor (429 aa).

A PPIase FKBP-type domain is found at 164–249 (GDWAVIDHEG…LKALKVRQAP (86 aa)).

The protein belongs to the FKBP-type PPIase family. Tig subfamily.

It localises to the cytoplasm. It catalyses the reaction [protein]-peptidylproline (omega=180) = [protein]-peptidylproline (omega=0). Functionally, involved in protein export. Acts as a chaperone by maintaining the newly synthesized protein in an open conformation. Functions as a peptidyl-prolyl cis-trans isomerase. The protein is Trigger factor of Anaeromyxobacter dehalogenans (strain 2CP-C).